Here is a 240-residue protein sequence, read N- to C-terminus: Lipoprotein signal peptidase (240 aa).

Helical transmembrane passes span 38–58 (LIWK…TSFL), 73–93 (LIPG…FGTL), 98–118 (PSLV…VLLF), and 120–140 (SNYL…SNII). Active-site residues include aspartate 162 and aspartate 179. A helical membrane pass occupies residues 177–197 (FPDTFVIIGMIFVGIQIIISF).

Belongs to the peptidase A8 family.

The protein localises to the cell membrane. It catalyses the reaction Release of signal peptides from bacterial membrane prolipoproteins. Hydrolyzes -Xaa-Yaa-Zaa-|-(S,diacylglyceryl)Cys-, in which Xaa is hydrophobic (preferably Leu), and Yaa (Ala or Ser) and Zaa (Gly or Ala) have small, neutral side chains.. The protein operates within protein modification; lipoprotein biosynthesis (signal peptide cleavage). This protein specifically catalyzes the removal of signal peptides from prolipoproteins. In Malacoplasma penetrans (strain HF-2) (Mycoplasma penetrans), this protein is Lipoprotein signal peptidase.